A 462-amino-acid polypeptide reads, in one-letter code: Elongation factor 1-alpha 1 (462 aa).

Gly-2 carries the post-translational modification N,N,N-trimethylglycine. In terms of domain architecture, tr-type G spans 5–242 (KTHINIVVIG…DCILPPTRPT (238 aa)). Residues 14–21 (GHVDSGKS) form a G1 region. Position 14-21 (14-21 (GHVDSGKS)) interacts with GTP. At Lys-36 the chain carries N6,N6,N6-trimethyllysine; alternate. Lys-36 bears the N6,N6-dimethyllysine; alternate mark. At Lys-36 the chain carries N6-methyllysine; alternate. An N6,N6-dimethyllysine modification is found at Lys-55. Residues 70 to 74 (GITID) are G2. Lys-79 is modified (N6,N6,N6-trimethyllysine; by EEF1AKMT1). Positions 91–94 (DAPG) are G3. Position 153–156 (153–156 (NKMD)) interacts with GTP. The interval 153 to 156 (NKMD) is G4. Lys-165 is modified (N6,N6,N6-trimethyllysine; alternate; by EEF1AKMT3). An N6,N6-dimethyllysine; alternate; by EEF1AKMT3 modification is found at Lys-165. Residue Lys-165 is modified to N6-acetyllysine; alternate. Lys-165 carries the N6-methyllysine; alternate; by EEF1AKMT3 modification. Lys-172 carries the post-translational modification N6-acetyllysine. 194-196 (SGW) provides a ligand contact to GTP. A G5 region spans residues 194-196 (SGW). Lys-273 bears the N6-acetyllysine mark. Phosphoserine; by TGFBR1 is present on Ser-300. Glu-301 carries the 5-glutamyl glycerylphosphorylethanolamine modification. N6,N6,N6-trimethyllysine; by EEF1AKMT2 is present on Lys-318. The residue at position 374 (Glu-374) is a 5-glutamyl glycerylphosphorylethanolamine. A Glycyl lysine isopeptide (Lys-Gly) (interchain with G-Cter in ubiquitin) cross-link involves residue Lys-385. Lys-392 carries the N6-acetyllysine; alternate modification. Lys-392 is subject to N6-succinyllysine; alternate. A Phosphothreonine; by PASK modification is found at Thr-432. Lys-439 carries the N6-acetyllysine modification.

The protein belongs to the TRAFAC class translation factor GTPase superfamily. Classic translation factor GTPase family. EF-Tu/EF-1A subfamily. In terms of assembly, found in a nuclear export complex with XPO5, EEF1A1, Ran and aminoacylated tRNA. Interacts with PARP1 and TXK. Interacts with KARS1. May interact with ERGIC2. Interacts with IFIT1 (via TPR repeats 4-7). Interacts with DLC1, facilitating distribution to the membrane periphery and ruffles upon growth factor stimulation. Interacts with ZPR1; the interaction occurs in a epidermal growth factor (EGF)-dependent manner. Interacts with PPP1R16B. Interacts with SPHK1 and SPHK2; both interactions increase SPHK1 and SPHK2 kinase activity. Interacts with guanyl-nucleotide exchange factor EEF1B2. Interacts (via middle-region) with HTATIP2 (via N-terminus); the interaction is direct and competes with EEF1A1 binding to guanyl-nucleotide exchange factor EEF1B2, thereby inhibiting GDP for GTP exchange and reactivation of EEF1A1. Interacts with tRNA. ISGylated. Post-translationally, phosphorylated by TXK. Phosphorylation by PASK increases translation efficiency. Phosphorylated by ROCK2. Phosphorylation by TGFBR1 inhibits translation elongation. In terms of processing, trimethylated at Lys-79 by EEF1AKMT1. Methylated at Lys-165 by EEF1AKMT3, methylation by EEF1AKMT3 is dynamic as well as inducible by stress conditions, such as ER-stress, and plays a regulatory role on mRNA translation. Trimethylated at Lys-318 by EEF1AKMT2. Mono-, di-, and trimethylated at Lys-36 by EEF1AKMT4; trimethylated form is predominant. Methylation by EEF1AKMT4 contributes to the fine-tuning of translation rates for a subset of tRNAs. Trimethylated at Gly-2 by METTL13. Mono- and dimethylated at Lys-55 by METTL13; dimethylated form is predominant. Ubiquitinated at Lys-385 by RNF14 in response to ribosome collisions (ribosome stalling), leading to its degradation by the proteasome and rescue of stalled ribosomes.

It is found in the cytoplasm. Its subcellular location is the nucleus. The protein localises to the nucleolus. It localises to the cell membrane. The enzyme catalyses GTP + H2O = GDP + phosphate + H(+). Functionally, translation elongation factor that catalyzes the GTP-dependent binding of aminoacyl-tRNA (aa-tRNA) to the A-site of ribosomes during the elongation phase of protein synthesis. Base pairing between the mRNA codon and the aa-tRNA anticodon promotes GTP hydrolysis, releasing the aa-tRNA from EEF1A1 and allowing its accommodation into the ribosome. The growing protein chain is subsequently transferred from the P-site peptidyl tRNA to the A-site aa-tRNA, extending it by one amino acid through ribosome-catalyzed peptide bond formation. Also plays a role in the positive regulation of IFNG transcription in T-helper 1 cells as part of an IFNG promoter-binding complex with TXK and PARP1. Also plays a role in cytoskeleton organization by promoting actin bundling. The sequence is that of Elongation factor 1-alpha 1 (EEF1A1) from Equus caballus (Horse).